A 71-amino-acid chain; its full sequence is Beta-defensin 131A (71 aa).

The N-terminal stretch at 1-22 is a signal peptide; sequence MRVLFFVFGVLSLMFTVPPARS. 3 cysteine pairs are disulfide-bonded: cysteine 29-cysteine 57, cysteine 37-cysteine 51, and cysteine 41-cysteine 58.

Belongs to the beta-defensin family.

It localises to the secreted. Its function is as follows. Has antibacterial activity. Upon stimulation with lipoteichoic acid, promotes cytokines and chemokines production and secretion. This Pan troglodytes (Chimpanzee) protein is Beta-defensin 131A.